A 512-amino-acid polypeptide reads, in one-letter code: MKAGCSIVEKPEGGGGYQFPDWAYKTESSPGSRQIQLWHFILELLQKEEFRHVIAWQQGEYGEFVIKDPDEVARLWGRRKCKPQMNYDKLSRALRYYYNKRILHKTKGKRFTYKFNFNKLVMPNYPFINIRSSGVVPQSAPPVPTASSRFHFPPLDTHSPTNDVQPGRFSASSLTASGQESSNGTDRKTELSELEDGSAADWRRGVDPVSSRNAIGGGGIGHQKRKPDIMLPLFARPGMYPDPHSPFAVSPIPGRGGVLNVPISPALSLTPTIFSYSPSPGLSPFTSSSCFSFNPEEMKHYLHSQACSVFNYHLSPRTFPRYPGLMVPPLQCQMHPEESTQFSIKLQPPPVGRKNRERVESSEESAPVTTPTMASIPPRIKVEPASEKDPESLRQSAREKEEHTQEEGTVPSRTIEEEKGTIFARPAAPPIWPSVPISTPSGEPLEVTEDSEDRPGKEPSAPEKKEDALMPPKLRLKRRWNDDPEARELSKSGKFLWNGSGPQGLATAAADA.

Residues 35-116 constitute a DNA-binding region (ETS); it reads IQLWHFILEL…KGKRFTYKFN (82 aa). The tract at residues 136–222 is disordered; that stretch reads VPQSAPPVPT…NAIGGGGIGH (87 aa). Residues S139, S159, and S315 each carry the phosphoserine modification. Polar residues predominate over residues 158 to 184; sequence HSPTNDVQPGRFSASSLTASGQESSNG. The interval 336 to 512 is disordered; it reads PEESTQFSIK…QGLATAAADA (177 aa). Composition is skewed to basic and acidic residues over residues 380–406, 453–468, and 479–491; these read IKVE…HTQE, DRPG…KEDA, and RWND…ELSK. A Glycyl lysine isopeptide (Lys-Gly) (interchain with G-Cter in SUMO2) cross-link involves residue K381. The residue at position 388 (K388) is an N6-acetyllysine; alternate. Residue K388 forms a Glycyl lysine isopeptide (Lys-Gly) (interchain with G-Cter in SUMO2); alternate linkage.

Belongs to the ETS family.

The protein localises to the nucleus. Functionally, transcriptional repressor that contribute to growth arrest during terminal macrophage differentiation by repressing target genes involved in Ras-dependent proliferation. Represses MMP1 promoter activity. This Homo sapiens (Human) protein is ETS translocation variant 3 (ETV3).